Consider the following 257-residue polypeptide: UPF0246 protein A1S_2267 (257 aa).

The protein belongs to the UPF0246 family.

This Acinetobacter baumannii (strain ATCC 17978 / DSM 105126 / CIP 53.77 / LMG 1025 / NCDC KC755 / 5377) protein is UPF0246 protein A1S_2267.